The sequence spans 449 residues: Tubulin alpha chain (449 aa).

The GTP site is built by Q11, E71, S140, G144, T145, T179, N206, and N228. Residue E71 coordinates Mg(2+). E254 is a catalytic residue.

This sequence belongs to the tubulin family. In terms of assembly, dimer of alpha and beta chains. A typical microtubule is a hollow water-filled tube with an outer diameter of 25 nm and an inner diameter of 15 nM. Alpha-beta heterodimers associate head-to-tail to form protofilaments running lengthwise along the microtubule wall with the beta-tubulin subunit facing the microtubule plus end conferring a structural polarity. Microtubules usually have 13 protofilaments but different protofilament numbers can be found in some organisms and specialized cells. Mg(2+) is required as a cofactor.

Its subcellular location is the cytoplasm. It is found in the cytoskeleton. It carries out the reaction GTP + H2O = GDP + phosphate + H(+). Functionally, tubulin is the major constituent of microtubules, a cylinder consisting of laterally associated linear protofilaments composed of alpha- and beta-tubulin heterodimers. Microtubules grow by the addition of GTP-tubulin dimers to the microtubule end, where a stabilizing cap forms. Below the cap, tubulin dimers are in GDP-bound state, owing to GTPase activity of alpha-tubulin. The chain is Tubulin alpha chain (TUBA) from Sordaria macrospora (strain ATCC MYA-333 / DSM 997 / K(L3346) / K-hell).